A 1703-amino-acid chain; its full sequence is MAELGQQTVDFSALVGRAAEESFLSFKELVDKSKSTELSDTEKKVSLLKYVAKTQQRMLRLNALAKWCKQVPLINYFQDLGSTLSAHDICFTQAADSLFFMHEGLQQARAPVYDVPSAVEILLTGSYQRLPKCLDDVGMQSSLDEHQQKPALRKLEVLVRSKLLEITLPKEITEVKISKGTVTLSVDGEFKVLVTLGYRGHLSMWRILHLDLLVGERSGPIKLEVTRRHILGDDLERRMSVAENPFTILYAVLHELCVAIVMDTVIRQVRALLQGRWKDAIRFDLISDTGTTPANQEGEADSVSLRTPGMKLFYWSDSDKNSGPFIKIEPGSDLQIKCSHSTFVIDPLTGKEAEFSLDQSCIDVEKLLLKAICCNRYTRLLEIQKELLRNTRICRTPSDVILQALLDEPGIEGDNMVDSKERVEPEVLRVRAYGSSFFTLGINIRTGRFLLQSSKSILTSSILEEFEDALNQGSISAVDAFINLRSKSILHFFAAIGKFLGLEVYEHGFGINKVPKSLLDGSSILTLGFPDCESSHLLLMELEKDFTPLFKLLETQMDGSGKPQSFNDPSNILRAKKIDIGQIRILEDDLNLITSDVVKFVSSFSDAEGINQASGHRQPGLVDEALTEMSGSQLSFSSVVDGVFGLQKVTSALMSIDGHGLVPKNLSAVTGHGKAPMLTSYHSDSLYNRQGPLQSSSYNMLSSPPGKGSAMKKIAISNSDQELSLILSPSLSTGNGVSESGSRLVTESSLSPLPLSQTADLATSSAGPLLRKDQKPRKRSASDLLRLIPSLQVVEGVASPNKRRKTSELVQSELVKSWSPASQTLSTAVSTSTKTIGCSYGNLIAEANKGNAPSSVFVYALLHVVRHSSLSIKHAKLTSQMEALDIQYVEEMGLRDAFSDIWFRLPFAQNDSWQHICLQLGRPGSMCWDVKINDQHFRDLWELQKGSKTTPWGSGVHIANSSDVDSHIRYDPEGVVLSYQSVEADSIKKLVADIQRLSNARMFSLGMRKLLGIKPDEKTEECSANSTMKGSTGGKGSGEPVDRWRAFKIEAVGLTSLWFSFGSGVLARFVVEWESGKDGCTMHVSPDQLWPHTKFLEDFINGAEVESLLDCIRLTAGPLHALAAATRPARASTATGMPVVPATASSRQSNQIQQTQGIIAPSTLAAPNATGQSASATSGNTVASSAPSPLGGGFHGVAMLAAAGRSGPGIVPSSLLPIDVSVVLRGPYWIRIIYRKRFAVDMRCFAGDQVWLQPATPPKGGASIGGSLPCPQFRPFIMEHVAQELNGLEPNLTGSQGATNPNSGNPTVNGVNRVNFSPSSARAAMNRVASVASGSLVVSSGLPVRRTPGTAVPAHVRGELNTAIIGLGDDGGYGGGWVPLVALKKVLRGILKYLGVLWLFAQLPDLLREILGSILKDNEGALLNLDQEQPALRFFVGGYVFAVSVHRVQLLLQVLSVRRFHHQAQQNGSSAAAQEELTQSEIGEICDYFSRRVASEPYDASRVASFITLLTLPISVLREFLKLIAWKKGLSQSQQAGEIAPAQRPRIELCLENHSGTDLDNNCAAKSNIHYDRPHNTVDFALTVVLDPVHIPHINAAGGAAWLPYCVSVRLRYTFGENPSVTFLGMEGSHGGRACWQRVDDWEKCKQRVSRTVEVNGSAAGDLTQGKLKLVADSVQRTLHLCLQGLREGGNNNNNTHQKEFTI.

A compositionally biased stretch (polar residues) spans 755 to 766 (LSQTADLATSSA). Positions 755-781 (LSQTADLATSSAGPLLRKDQKPRKRSA) are disordered.

Belongs to the Mediator complex subunit 14 family. As to quaternary structure, component of the Mediator complex. Interacts with CDKE-1, HDA19 and LUG. Interacts with PTAC12/HMR/PAP5 and PIF4. As to expression, expressed in roots, stems, developing embryos, young leaf primordia, shoot apical meristems, inflorescence meristems, tapetum in anthers, ovules and floral organ primordia, but not in mature organs.

The protein localises to the nucleus. Functionally, component of the Mediator complex, a coactivator involved in the regulated transcription of nearly all RNA polymerase II-dependent genes. Mediator functions as a bridge to convey information from gene-specific regulatory proteins to the basal RNA polymerase II transcription machinery. The Mediator complex, having a compact conformation in its free form, is recruited to promoters by direct interactions with regulatory proteins and serves for the assembly of a functional pre-initiation complex with RNA polymerase II and the general transcription factors. Binds to G-box (5'-CACGTG-3')-containing regions of target genes promoters (e.g. IAA29 and IAA19). Involved in defining the duration of cell proliferation. Element of a PIF4/HMR/MED14-dependent thermoresponsive process; required for thermomorphogenetic hypocotyl growth in response to daytime warm temperature elicitation by associating to the promoters of thermoresponsive growth-relevant genes (e.g. mainly involved in biosynthesis and signaling of the phytohormone auxin); this also process implies PIF4 and its transcriptional coactivator PTAC12/HMR/PAP5 to promote the expression of target genes. This Arabidopsis thaliana (Mouse-ear cress) protein is Mediator of RNA polymerase II transcription subunit 14.